A 105-amino-acid chain; its full sequence is MIASKFGIGQQVRHKLLGYLGVIIDIDPEYSLEKPTLDEITKNDTLRKSPWYHVVMEDEEGKPMHTYLAEVQLGYENILTHPEQTTLDELSESIRLQLQTPRLRN.

The protein belongs to the HspQ family.

It localises to the cytoplasm. Involved in the degradation of certain denaturated proteins, including DnaA, during heat shock stress. This is Heat shock protein HspQ from Blochmanniella pennsylvanica (strain BPEN).